A 1043-amino-acid chain; its full sequence is Sarcoplasmic/endoplasmic reticulum calcium ATPase 2 (1043 aa).

The Cytoplasmic segment spans residues 1-48; it reads MENAHTKTVEEVLGHFGVNESTGLSLEQVKKLKERWGSNELPAEEGKT. S38 is modified (phosphoserine). A helical membrane pass occupies residues 49–69; sequence LLELVIEQFEDLLVRILLLAA. Residues 70–89 are Lumenal-facing; sequence CISFVLAWFEEGEETITAFV. Residues 90–110 form a helical membrane-spanning segment; it reads EPFVILLILVANAIVGVWQER. At 111 to 253 the chain is on the cytoplasmic side; that stretch reads NAENAIEALK…QERTPLQQKL (143 aa). Residues 254 to 273 form a helical membrane-spanning segment; it reads DEFGEQLSKVISLICIAVWI. The Lumenal segment spans residues 274–295; the sequence is INIGHFNDPVHGGSWIRGAIYY. 3'-nitrotyrosine occurs at positions 294 and 295. The chain crosses the membrane as a helical span at residues 296-313; it reads FKIAVALAVAAIPEGLPA. The Ca(2+) site is built by V304, A305, I307, and E309. Topologically, residues 314 to 756 are cytoplasmic; the sequence is VITTCLALGT…EEGRAIYNNM (443 aa). D351 (4-aspartylphosphate intermediate) is an active-site residue. D351 and T353 together coordinate Mg(2+). Position 353 (T353) interacts with ATP. Phosphothreonine is present on T441. Positions 442, 489, and 514 each coordinate ATP. S531 is subject to Phosphoserine. R559 serves as a coordination point for ATP. An interaction with HAX1 region spans residues 575 to 594; it reads MHLEDSANFIKYETNLTFVG. At S580 the chain carries Phosphoserine. 3 residues coordinate ATP: T624, G625, and D626. S661 and S663 each carry phosphoserine. 2 residues coordinate ATP: R677 and K683. D702 is a binding site for Mg(2+). Residue N705 participates in ATP binding. A helical transmembrane segment spans residues 757–776; the sequence is KQFIRYLISSNVGEVVCIFL. Residues N767 and E770 each contribute to the Ca(2+) site. At 777-786 the chain is on the lumenal side; that stretch reads TAALGFPEAL. The chain crosses the membrane as a helical span at residues 787-807; the sequence is IPVQLLWVNLVTDGLPATALG. The tract at residues 787 to 807 is interaction with PLN; that stretch reads IPVQLLWVNLVTDGLPATALG. The interval 788–1043 is interaction with TMEM64 and PDIA3; that stretch reads PVQLLWVNLV…DTNFSDMFWS (256 aa). Residues N795, T798, and D799 each contribute to the Ca(2+) site. The Cytoplasmic portion of the chain corresponds to 808–827; the sequence is FNPPDLDIMNKPPRNPKEPL. A helical transmembrane segment spans residues 828–850; sequence ISGWLFFRYLAIGCYVGAATVGA. Residues 851–896 are Lumenal-facing; the sequence is AAWWFIAADGGPRVSFYQLSHFLQCKEDNPDFEGVDCAIFESPYPM. C875 and C887 form a disulfide bridge. A helical transmembrane segment spans residues 897-916; sequence TMALSVLVTIEMCNALNSLS. E907 is a Ca(2+) binding site. Residues 917 to 929 are Cytoplasmic-facing; sequence ENQSLLRMPPWEN. Residues 930-948 form a helical membrane-spanning segment; the sequence is IWLVGSICLSMSLHFLILY. The segment at 931 to 942 is interaction with PLN; that stretch reads WLVGSICLSMSL. Residues 949–963 are Lumenal-facing; it reads VEPLPLIFQITPLNL. A helical transmembrane segment spans residues 964-984; it reads TQWLMVLKISLPVILMDETLK. The Cytoplasmic segment spans residues 985-1043; sequence FVARNYLEPGKECAQPATKPSCSLSACTDGISWPFVLLIMPLVVWVYSTDTNFSDMFWS.

The protein belongs to the cation transport ATPase (P-type) (TC 3.A.3) family. Type IIA subfamily. In terms of assembly, interacts with sarcolipin (SLN); the interaction inhibits ATP2A2 Ca(2+) affinity. Interacts with phospholamban (PLN); the interaction inhibits ATP2A2 Ca(2+) affinity. Interacts with myoregulin (MRLN). Interacts with ARLN and ERLN; the interactions inhibit ATP2A2 Ca(2+) affinity. Interacts with STRIT1/DWORF; the interaction results in activation of ATP2A2. Interacts with the monomeric forms of SLN, PLN, ARLN, ERLN and STRI1/DWORF. Interacts with HAX1. Interacts with S100A8 and S100A9. Interacts with SLC35G1 and STIM1. Interacts with TMEM203. Interacts with TMEM64 and PDIA3. Interacts with TMX1. Interacts with TMX2. Interacts with VMP1; VMP1 competes with PLN and SLN to prevent them from forming an inhibitory complex with ATP2A2. Interacts with ULK1. Interacts with S100A1 in a Ca(2+)-dependent manner. Interacts with TUNAR. Interacts with FLVCR2; this interaction occurs in the absence of heme and promotes ATP2A2 proteasomal degradation; this complex is dissociated upon heme binding. Interacts with FNIP1. As to quaternary structure, interacts with TRAM2 (via C-terminus). Mg(2+) serves as cofactor. Nitrated under oxidative stress. Nitration on the two tyrosine residues inhibits catalytic activity. Post-translationally, serotonylated on Gln residues by TGM2 in response to hypoxia, leading to its inactivation. As to expression, isoform 2 is highly expressed in heart and slow twitch skeletal muscle. Isoform 1 is widely expressed.

The protein resides in the endoplasmic reticulum membrane. It localises to the sarcoplasmic reticulum membrane. It carries out the reaction Ca(2+)(in) + ATP + H2O = Ca(2+)(out) + ADP + phosphate + H(+). Has different conformational states with differential Ca2+ affinity. The E1 conformational state (active form) shows high Ca(2+) affinity, while the E2 state exhibits low Ca(2+) affinity. Binding of ATP allosterically increases its affinity for subsequent binding of Ca2+. Reversibly inhibited by phospholamban (PLN) at low calcium concentrations. PLN inhibits ATP2A2 Ca(2+) affinity by disrupting its allosteric activation by ATP. Inhibited by sarcolipin (SLN) and myoregulin (MRLN). The inhibition is blocked by VMP1. Enhanced by STRIT1/DWORF; STRIT1 increases activity by displacing sarcolipin (SLN), phospholamban (PLN) and myoregulin (MRLN). Stabilizes SERCA2 in its E2 state. Its function is as follows. This magnesium-dependent enzyme catalyzes the hydrolysis of ATP coupled with the translocation of calcium from the cytosol to the sarcoplasmic reticulum lumen. Involved in autophagy in response to starvation. Upon interaction with VMP1 and activation, controls ER-isolation membrane contacts for autophagosome formation. Also modulates ER contacts with lipid droplets, mitochondria and endosomes. In coordination with FLVCR2 mediates heme-stimulated switching from mitochondrial ATP synthesis to thermogenesis. Functionally, involved in the regulation of the contraction/relaxation cycle. Acts as a regulator of TNFSF11-mediated Ca(2+) signaling pathways via its interaction with TMEM64 which is critical for the TNFSF11-induced CREB1 activation and mitochondrial ROS generation necessary for proper osteoclast generation. Association between TMEM64 and SERCA2 in the ER leads to cytosolic Ca(2+) spiking for activation of NFATC1 and production of mitochondrial ROS, thereby triggering Ca(2+) signaling cascades that promote osteoclast differentiation and activation. The chain is Sarcoplasmic/endoplasmic reticulum calcium ATPase 2 (Atp2a2) from Rattus norvegicus (Rat).